The following is a 457-amino-acid chain: PDZ and LIM domain protein 7 (457 aa).

The PDZ domain occupies 1 to 85 (MDSFKVVLEG…RLSLGLSRAQ (85 aa)). Serine 78 is subject to Phosphoserine. Disordered regions lie at residues 81 to 132 (LSRA…LSQN) and 186 to 226 (FMKK…PWAV). A Phosphothreonine modification is found at threonine 96. Arginine 103 is subject to Asymmetric dimethylarginine. Serine 111 carries the phosphoserine modification. A Phosphoserine modification is found at serine 247. LIM zinc-binding domains are found at residues 280–338 (PVCH…VRYA), 339–398 (PSCA…MFGT), and 399–457 (KCRG…FSHV).

As to quaternary structure, binds via its LIM zinc-binding 3 domain (LIM 3) domain to endocytic codes of INSR, but not with those of IGF1R, LDLR, TFRC, or EGFR. Interacts with various PKC isoforms through the LIM zinc-binding domains. Binds to RET in a phosphorylation-independent manner via its LIM zinc-binding 2 domain (LIM 2). Probably part of a complex with SHC and the RET dimer. Interacts with TPM2, TBX4 and TBX5. Interacts (via LIM domains) with SIPA1L1. Expressed in kidney, heart, brain, lung, and skeletal muscle. Overexpression results in the synthesis of an unidentified soluble factor which acts on cells in the osteoblast lineage causing them to differentiate and secrete BMP-2.

The protein localises to the cytoplasm. It is found in the cytoskeleton. Its function is as follows. May function as a scaffold on which the coordinated assembly of proteins can occur. May play a role as an adapter that, via its PDZ domain, localizes LIM-binding proteins to actin filaments of both skeletal muscle and nonmuscle tissues. Involved in both of the two fundamental mechanisms of bone formation, direct bone formation (e.g. embryonic flat bones mandible and cranium), and endochondral bone formation (e.g. embryonic long bone development). Plays a role during fracture repair. Involved in BMP6 signaling pathway. This is PDZ and LIM domain protein 7 (Pdlim7) from Rattus norvegicus (Rat).